We begin with the raw amino-acid sequence, 155 residues long: Endoribonuclease YbeY (155 aa).

3 residues coordinate Zn(2+): histidine 114, histidine 118, and histidine 124.

This sequence belongs to the endoribonuclease YbeY family. Requires Zn(2+) as cofactor.

It is found in the cytoplasm. In terms of biological role, single strand-specific metallo-endoribonuclease involved in late-stage 70S ribosome quality control and in maturation of the 3' terminus of the 16S rRNA. The protein is Endoribonuclease YbeY of Tolumonas auensis (strain DSM 9187 / NBRC 110442 / TA 4).